A 439-amino-acid polypeptide reads, in one-letter code: Secreted aspartic protease FUS4 (439 aa).

Positions 1–22 (MLTIATLHVALQVFGAFSPSHA) are cleaved as a signal peptide. The 386-residue stretch at 49–434 (YLFNVTVGSP…NFEDRSFGLA (386 aa)) folds into the Peptidase A1 domain. N-linked (GlcNAc...) asparagine glycosylation is found at Asn-52 and Asn-61. Asp-67 is a catalytic residue. Residues Asn-101, Asn-107, and Asn-123 are each glycosylated (N-linked (GlcNAc...) asparagine). Asp-296 is an active-site residue. The cysteines at positions 352 and 390 are disulfide-linked.

This sequence belongs to the peptidase A1 family.

Its subcellular location is the secreted. Secreted aspartic protease; part of the gene cluster that mediates the biosynthesis of the mycotoxin fusarin C. Within the cluster, FUS1, FUS2, FUS8 and FUS9 are sufficient for fusarin production. The other FUS cluster members are not essential for fusarin C biosynthesis. This Gibberella moniliformis (strain M3125 / FGSC 7600) (Maize ear and stalk rot fungus) protein is Secreted aspartic protease FUS4.